We begin with the raw amino-acid sequence, 551 residues long: Small ribosomal subunit protein bS1 (551 aa).

S1 motif domains follow at residues 21 to 83, 101 to 167, 188 to 256, 273 to 343, 360 to 430, and 447 to 516; these read GALV…LSRE, GEMV…VSRR, GQEI…LGMK, NSRV…LGIK, DEKI…LGIK, and DAVI…VSHK.

This sequence belongs to the bacterial ribosomal protein bS1 family.

In terms of biological role, binds mRNA; thus facilitating recognition of the initiation point. It is needed to translate mRNA with a short Shine-Dalgarno (SD) purine-rich sequence. In Coxiella burnetii (strain RSA 493 / Nine Mile phase I), this protein is Small ribosomal subunit protein bS1 (rpsA).